A 389-amino-acid polypeptide reads, in one-letter code: Endonuclease 8-like 1 (389 aa).

The active-site Schiff-base intermediate with DNA is the Pro2. The active-site Proton donor is the Glu3. Lys54 (proton donor; for beta-elimination activity) is an active-site residue. Position 176 (Asn176) interacts with DNA. The segment at 278-389 (TIWFQGDPGP…PREAGESSAS (112 aa)) is disordered. The segment covering 322–333 (SRMRRARKHPPK) has biased composition (basic residues). The segment covering 336-351 (AQQSEGAGLQQNQETP) has biased composition (polar residues). The span at 357–373 (GKRRGQRASTGHRRRPK) shows a compositional bias: basic residues. The span at 374 to 389 (TIPDTRPREAGESSAS) shows a compositional bias: basic and acidic residues.

This sequence belongs to the FPG family. Detected in heart, spleen and lung.

The protein localises to the cytoplasm. It localises to the cytoskeleton. The protein resides in the microtubule organizing center. Its subcellular location is the centrosome. It is found in the nucleus. The protein localises to the chromosome. It catalyses the reaction 2'-deoxyribonucleotide-(2'-deoxyribose 5'-phosphate)-2'-deoxyribonucleotide-DNA = a 3'-end 2'-deoxyribonucleotide-(2,3-dehydro-2,3-deoxyribose 5'-phosphate)-DNA + a 5'-end 5'-phospho-2'-deoxyribonucleoside-DNA + H(+). Involved in base excision repair of DNA damaged by oxidation or by mutagenic agents. Acts as a DNA glycosylase that recognizes and removes damaged bases. Has a preference for oxidized pyrimidines, such as thymine glycol, formamidopyrimidine (Fapy) and 5-hydroxyuracil. Has marginal activity towards 8-oxoguanine. Has AP (apurinic/apyrimidinic) lyase activity and introduces nicks in the DNA strand. Cleaves the DNA backbone by beta-delta elimination to generate a single-strand break at the site of the removed base with both 3'- and 5'-phosphates. Has DNA glycosylase/lyase activity towards mismatched uracil and thymine, in particular in U:C and T:C mismatches. Specifically binds 5-hydroxymethylcytosine (5hmC), suggesting that it acts as a specific reader of 5hmC. The polypeptide is Endonuclease 8-like 1 (Neil1) (Mus musculus (Mouse)).